A 777-amino-acid chain; its full sequence is Penicillin-binding protein 1B (777 aa).

At 1–30 (MTRKSSNRSRGRKARSGKSASSSKLQIWLG) the chain is on the cytoplasmic side. The chain crosses the membrane as a helical; Signal-anchor for type II membrane protein span at residues 31–52 (RIWSIGWKLALTLAAVLVFIGI). At 53-777 (YLDSMIKQRF…TEWIKKLFEW (725 aa)) the chain is on the periplasmic side. The segment at 162 to 334 (LRLEPKLMGM…SYYNPMRYAE (173 aa)) is transglycosylase. E200 acts as the Proton donor; for transglycosylase activity in catalysis. The interval 415-709 (SKLEQAIHDQ…ASGALRVYAQ (295 aa)) is transpeptidase. The Acyl-ester intermediate; for transpeptidase activity role is filled by S476.

It in the N-terminal section; belongs to the glycosyltransferase 51 family. The protein in the C-terminal section; belongs to the transpeptidase family.

The protein resides in the cell inner membrane. It catalyses the reaction [GlcNAc-(1-&gt;4)-Mur2Ac(oyl-L-Ala-gamma-D-Glu-L-Lys-D-Ala-D-Ala)](n)-di-trans,octa-cis-undecaprenyl diphosphate + beta-D-GlcNAc-(1-&gt;4)-Mur2Ac(oyl-L-Ala-gamma-D-Glu-L-Lys-D-Ala-D-Ala)-di-trans,octa-cis-undecaprenyl diphosphate = [GlcNAc-(1-&gt;4)-Mur2Ac(oyl-L-Ala-gamma-D-Glu-L-Lys-D-Ala-D-Ala)](n+1)-di-trans,octa-cis-undecaprenyl diphosphate + di-trans,octa-cis-undecaprenyl diphosphate + H(+). The enzyme catalyses Preferential cleavage: (Ac)2-L-Lys-D-Ala-|-D-Ala. Also transpeptidation of peptidyl-alanyl moieties that are N-acyl substituents of D-alanine.. It functions in the pathway cell wall biogenesis; peptidoglycan biosynthesis. Functionally, cell wall formation. Synthesis of cross-linked peptidoglycan from the lipid intermediates. The enzyme has a penicillin-insensitive transglycosylase N-terminal domain (formation of linear glycan strands) and a penicillin-sensitive transpeptidase C-terminal domain (cross-linking of the peptide subunits). This is Penicillin-binding protein 1B (mrcB) from Vibrio cholerae serotype O1 (strain ATCC 39315 / El Tor Inaba N16961).